The chain runs to 192 residues: 7-methyl-GTP pyrophosphatase (192 aa).

The Proton acceptor role is filled by aspartate 69.

This sequence belongs to the Maf family. YceF subfamily. A divalent metal cation is required as a cofactor.

It localises to the cytoplasm. The catalysed reaction is N(7)-methyl-GTP + H2O = N(7)-methyl-GMP + diphosphate + H(+). In terms of biological role, nucleoside triphosphate pyrophosphatase that hydrolyzes 7-methyl-GTP (m(7)GTP). May have a dual role in cell division arrest and in preventing the incorporation of modified nucleotides into cellular nucleic acids. The protein is 7-methyl-GTP pyrophosphatase (maf-1) of Pseudomonas syringae pv. tomato (strain ATCC BAA-871 / DC3000).